The primary structure comprises 298 residues: UDP-N-acetylenolpyruvoylglucosamine reductase (298 aa).

One can recognise an FAD-binding PCMH-type domain in the interval 27–191; that stretch reads TGGNADVFVM…LDATFSLELE (165 aa). R170 is a catalytic residue. The Proton donor role is filled by S220. E290 is a catalytic residue.

It belongs to the MurB family. FAD serves as cofactor.

It localises to the cytoplasm. The enzyme catalyses UDP-N-acetyl-alpha-D-muramate + NADP(+) = UDP-N-acetyl-3-O-(1-carboxyvinyl)-alpha-D-glucosamine + NADPH + H(+). It participates in cell wall biogenesis; peptidoglycan biosynthesis. Its function is as follows. Cell wall formation. This chain is UDP-N-acetylenolpyruvoylglucosamine reductase, found in Listeria innocua serovar 6a (strain ATCC BAA-680 / CLIP 11262).